The chain runs to 239 residues: uncharacterized protein (239 aa).

A disordered region spans residues 129–155 (DSLDDEDDNMISSNDPTKSPEEHDTTT). A Phosphoserine modification is found at serine 160.

This is an uncharacterized protein from Schizosaccharomyces pombe (strain 972 / ATCC 24843) (Fission yeast).